A 557-amino-acid chain; its full sequence is MRDYDEVTAFLGEWGPFQRLIFFLLSASIIPNGFNGMSIVFLAGTPEHRCLVPHTVNLSSAWRNHSIPLETKDGRQVPQSCRRYRLATIANFSALGLEPGRDVDLEQLEQENCLDGWEYNKDVFLSTIVTEWDLVCKDDWKAPLTTSLFFVGVLMGSFISGQLSDRFGRKNVLFLTMGMQTGFSFLQLFSVNFEMFTVLFVLVGMGQISNYVAAFVLGTEILSKSIRIIFATLGVCIFYAFGFMVLPLFAYFIRDWRMLLLALTVPGVLCGALWWFIPESPRWLISQGRVKEAEVIIRKAAKFNGIVAPSTIFDPSELQDLNSKKPQSHHIYDLVRTRNIRIITIMSIILWLTISVGYFGLSLDTPNLHGDIYVNCFLLAAVEVPAYVLAWLLLQHLPRRYSISAALFLGGSVLLFIQLVPSELFYLSTALVMVGKFGITSAYSMVYVYTAELYPTVVRNMGVGVSSTASRLGSILSPYFVYLGAYDRFLPYILMGSLTILTAILTLFFPESFGAPLPDTIDQMLRVKGIKQWQIQSQTRTQKDGGESPTVLKSTAF.

The Cytoplasmic segment spans residues 1-20 (MRDYDEVTAFLGEWGPFQRL). The helical transmembrane segment at 21-41 (IFFLLSASIIPNGFNGMSIVF) threads the bilayer. Residues 42–142 (LAGTPEHRCL…DLVCKDDWKA (101 aa)) are Extracellular-facing. Residues asparagine 57, asparagine 64, and asparagine 91 are each glycosylated (N-linked (GlcNAc...) asparagine). The chain crosses the membrane as a helical span at residues 143–163 (PLTTSLFFVGVLMGSFISGQL). Over 164–172 (SDRFGRKNV) the chain is Cytoplasmic. The chain crosses the membrane as a helical span at residues 173–193 (LFLTMGMQTGFSFLQLFSVNF). The Extracellular portion of the chain corresponds to 194–197 (EMFT). The helical transmembrane segment at 198–218 (VLFVLVGMGQISNYVAAFVLG) threads the bilayer. 218–225 (GTEILSKS) is a binding site for ATP. Residues 219–232 (TEILSKSIRIIFAT) are Cytoplasmic-facing. The helical transmembrane segment at 233–253 (LGVCIFYAFGFMVLPLFAYFI) threads the bilayer. Residues 254-257 (RDWR) are Extracellular-facing. Residues 258–278 (MLLLALTVPGVLCGALWWFIP) traverse the membrane as a helical segment. The Cytoplasmic portion of the chain corresponds to 279 to 341 (ESPRWLISQG…YDLVRTRNIR (63 aa)). A helical membrane pass occupies residues 342–362 (IITIMSIILWLTISVGYFGLS). The Extracellular segment spans residues 363-373 (LDTPNLHGDIY). A helical transmembrane segment spans residues 374 to 394 (VNCFLLAAVEVPAYVLAWLLL). At 395–406 (QHLPRRYSISAA) the chain is on the cytoplasmic side. A helical membrane pass occupies residues 407-427 (LFLGGSVLLFIQLVPSELFYL). Residues 428 to 430 (STA) are Extracellular-facing. The chain crosses the membrane as a helical span at residues 431–451 (LVMVGKFGITSAYSMVYVYTA). Residues 452 to 462 (ELYPTVVRNMG) are Cytoplasmic-facing. A helical transmembrane segment spans residues 463 to 483 (VGVSSTASRLGSILSPYFVYL). The Extracellular portion of the chain corresponds to 484–488 (GAYDR). Tyrosine 486 is subject to Phosphotyrosine. Residues 489-509 (FLPYILMGSLTILTAILTLFF) traverse the membrane as a helical segment. The Cytoplasmic portion of the chain corresponds to 510–557 (PESFGAPLPDTIDQMLRVKGIKQWQIQSQTRTQKDGGESPTVLKSTAF). The segment at 537 to 557 (SQTRTQKDGGESPTVLKSTAF) is disordered. Serine 548 is modified (phosphoserine). A Phosphothreonine modification is found at threonine 550.

This sequence belongs to the major facilitator (TC 2.A.1) superfamily. Organic cation transporter (TC 2.A.1.19) family. Interacts with PDZK1. As to expression, expressed in the proximal and distal tubules and in the glomeruli in the kidney, in the myocardium, valves, and arterioles in the heart, in the labyrinthine layer of the placenta, and in the cortex, hippocampus, and cerebellum in the brain. Expressed in Sertoli cells in testis.

Its subcellular location is the cell membrane. It localises to the apical cell membrane. It is found in the basal cell membrane. The catalysed reaction is (R)-carnitine(out) + Na(+)(out) = (R)-carnitine(in) + Na(+)(in). It carries out the reaction O-acetyl-(R)-carnitine(out) + Na(+)(out) = O-acetyl-(R)-carnitine(in) + Na(+)(in). The enzyme catalyses O-propanoyl-(R)-carnitine(out) + Na(+)(out) = O-propanoyl-(R)-carnitine(in) + Na(+)(in). It catalyses the reaction glycine betaine(out) + Na(+)(out) = glycine betaine(in) + Na(+)(in). The catalysed reaction is glycine betaine(out) + (R)-carnitine(in) = glycine betaine(in) + (R)-carnitine(out). It carries out the reaction O-butanoyl-(R)-carnitine(out) + Na(+)(out) = O-butanoyl-(R)-carnitine(in) + Na(+)(in). The enzyme catalyses (S)-carnitine(out) + Na(+)(out) = (S)-carnitine(in) + Na(+)(in). It catalyses the reaction an O-acyl-(R)-carnitine(out) + Na(+)(out) = an O-acyl-(R)-carnitine(in) + Na(+)(in). The catalysed reaction is L-glutamyl-L-arginyl-glycyl-L-methionyl-L-threonine(out) + Na(+)(out) = L-glutamyl-L-arginyl-glycyl-L-methionyl-L-threonine(in) + Na(+)(in). It carries out the reaction N,N-dimethylglycine(out) + Na(+)(out) = N,N-dimethylglycine(in) + Na(+)(in). With respect to regulation, inhibited by emetine, quinidine and verapamil. The IC(50) of emetine is 4.2 uM. Not inhibited by valproic acid. Transport of (R)-carnitine is stimulated by cholesterol in the plasma membrane. Functionally, sodium-ion dependent, high affinity carnitine transporter. Involved in the active cellular uptake of carnitine. Transports one sodium ion with one molecule of carnitine. Also transports organic cations such as tetraethylammonium (TEA) without the involvement of sodium. Also relative uptake activity ratio of carnitine to TEA is 11.3. May also contribute to regulate the transport of organic compounds in testis across the blood-testis-barrier. The protein is Organic cation/carnitine transporter 2 (Slc22a5) of Rattus norvegicus (Rat).